Consider the following 102-residue polypeptide: Keratin-associated protein 25-1 (102 aa).

It belongs to the PMG family. In terms of assembly, interacts with hair keratins.

Functionally, in the hair cortex, hair keratin intermediate filaments are embedded in an interfilamentous matrix, consisting of hair keratin-associated proteins (KRTAP), which are essential for the formation of a rigid and resistant hair shaft through their extensive disulfide bond cross-linking with abundant cysteine residues of hair keratins. The matrix proteins include the high-sulfur and high-glycine-tyrosine keratins. In Homo sapiens (Human), this protein is Keratin-associated protein 25-1 (KRTAP25-1).